The sequence spans 239 residues: Flagellin B3 (239 aa).

Positions 1–11 are excised as a propeptide; sequence MLKNFMKNKKG. 2 N-linked (GlcNAc...) asparagine glycosylation sites follow: asparagine 115 and asparagine 128.

The protein belongs to the archaeal flagellin family. In terms of processing, N-linked glycans consist of the 779 Da trisaccharide beta-ManNAc(Thr)-(1-4)-beta-GlcNAc3NAcA-(1-3)-beta-GlcNAc.

The protein resides in the archaeal flagellum. In terms of biological role, flagellin is the subunit protein which polymerizes to form the filaments of archaeal flagella. This is Flagellin B3 (flaB3) from Methanococcus voltae.